The following is a 236-amino-acid chain: Pyridoxine 5'-phosphate synthase (236 aa).

3-amino-2-oxopropyl phosphate is bound at residue Asn-6. 8-9 (DH) lines the 1-deoxy-D-xylulose 5-phosphate pocket. Residue Arg-17 coordinates 3-amino-2-oxopropyl phosphate. Residue His-42 is the Proton acceptor of the active site. Residues Arg-44 and His-49 each contribute to the 1-deoxy-D-xylulose 5-phosphate site. The active-site Proton acceptor is the Glu-69. Residue Thr-99 coordinates 1-deoxy-D-xylulose 5-phosphate. His-190 acts as the Proton donor in catalysis. 3-amino-2-oxopropyl phosphate-binding positions include Gly-191 and 212-213 (GH).

It belongs to the PNP synthase family. As to quaternary structure, homooctamer; tetramer of dimers.

It localises to the cytoplasm. The enzyme catalyses 3-amino-2-oxopropyl phosphate + 1-deoxy-D-xylulose 5-phosphate = pyridoxine 5'-phosphate + phosphate + 2 H2O + H(+). The protein operates within cofactor biosynthesis; pyridoxine 5'-phosphate biosynthesis; pyridoxine 5'-phosphate from D-erythrose 4-phosphate: step 5/5. Catalyzes the complicated ring closure reaction between the two acyclic compounds 1-deoxy-D-xylulose-5-phosphate (DXP) and 3-amino-2-oxopropyl phosphate (1-amino-acetone-3-phosphate or AAP) to form pyridoxine 5'-phosphate (PNP) and inorganic phosphate. This chain is Pyridoxine 5'-phosphate synthase, found in Chlorobium phaeobacteroides (strain DSM 266 / SMG 266 / 2430).